The following is a 220-amino-acid chain: LOB domain-containing protein 31 (220 aa).

An LOB domain is found at 10–112; the sequence is GPCGACKFLR…AELAYVQTQL (103 aa). Positions 117-172 are disordered; that stretch reads GLPPPNSQNNSRTEAASSSNVPLISSVDSKDNMSSSSSHIPCMSQQQEQEQPKEAI. Positions 123–139 are enriched in polar residues; that stretch reads SQNNSRTEAASSSNVPL.

The protein belongs to the LOB domain-containing protein family. As to expression, expressed in roots, stems and flowers.

The chain is LOB domain-containing protein 31 (LBD31) from Arabidopsis thaliana (Mouse-ear cress).